The chain runs to 375 residues: tRNA-specific 2-thiouridylase MnmA (375 aa).

ATP is bound by residues 16–23 and M42; that span reads GMSGGVDS. An interaction with target base in tRNA region spans residues 102 to 104; it reads NPD. C107 serves as the catalytic Nucleophile. C107 and C203 are oxidised to a cystine. G131 lines the ATP pocket. The tract at residues 153-155 is interaction with tRNA; the sequence is KDQ. The active-site Cysteine persulfide intermediate is C203. Positions 315 to 316 are interaction with tRNA; that stretch reads RY.

This sequence belongs to the MnmA/TRMU family.

The protein resides in the cytoplasm. It catalyses the reaction S-sulfanyl-L-cysteinyl-[protein] + uridine(34) in tRNA + AH2 + ATP = 2-thiouridine(34) in tRNA + L-cysteinyl-[protein] + A + AMP + diphosphate + H(+). Catalyzes the 2-thiolation of uridine at the wobble position (U34) of tRNA, leading to the formation of s(2)U34. The chain is tRNA-specific 2-thiouridylase MnmA from Pseudomonas aeruginosa (strain LESB58).